The sequence spans 210 residues: Probable septum site-determining protein MinC (210 aa).

This sequence belongs to the MinC family. Interacts with MinD and FtsZ.

Functionally, cell division inhibitor that blocks the formation of polar Z ring septums. Rapidly oscillates between the poles of the cell to destabilize FtsZ filaments that have formed before they mature into polar Z rings. Prevents FtsZ polymerization. The chain is Probable septum site-determining protein MinC from Thermotoga petrophila (strain ATCC BAA-488 / DSM 13995 / JCM 10881 / RKU-1).